A 93-amino-acid chain; its full sequence is Conotoxin Mr105 (93 aa).

Positions 1–22 (MQRGAVLLGVVALLVLWPQAGA) are cleaved as a signal peptide. Positions 23–33 (ELYDVNDPDVR) are excised as a propeptide.

It belongs to the F superfamily. Post-translationally, contains 4 disulfide bonds. Expressed by the venom duct.

It localises to the secreted. In Conus marmoreus (Marble cone), this protein is Conotoxin Mr105.